The primary structure comprises 717 residues: Ribosomal RNA large subunit methyltransferase K/L (717 aa).

Residues 45–142 (GAYRICLGSR…DKRSGVQTVQ (98 aa)) form the THUMP domain.

Belongs to the methyltransferase superfamily. RlmKL family.

It localises to the cytoplasm. The catalysed reaction is guanosine(2445) in 23S rRNA + S-adenosyl-L-methionine = N(2)-methylguanosine(2445) in 23S rRNA + S-adenosyl-L-homocysteine + H(+). It catalyses the reaction guanosine(2069) in 23S rRNA + S-adenosyl-L-methionine = N(2)-methylguanosine(2069) in 23S rRNA + S-adenosyl-L-homocysteine + H(+). In terms of biological role, specifically methylates the guanine in position 2445 (m2G2445) and the guanine in position 2069 (m7G2069) of 23S rRNA. This is Ribosomal RNA large subunit methyltransferase K/L from Hahella chejuensis (strain KCTC 2396).